Here is a 338-residue protein sequence, read N- to C-terminus: DNA-directed RNA polymerase subunit alpha (338 aa).

The alpha N-terminal domain (alpha-NTD) stretch occupies residues 1-234; the sequence is MIQKNWQELT…DQLNVFVNFE (234 aa). The interval 250–338 is alpha C-terminal domain (alpha-CTD); sequence FNPALLKKVD…DLAKRFEEHY (89 aa).

This sequence belongs to the RNA polymerase alpha chain family. As to quaternary structure, homodimer. The RNAP catalytic core consists of 2 alpha, 1 beta, 1 beta' and 1 omega subunit. When a sigma factor is associated with the core the holoenzyme is formed, which can initiate transcription.

It carries out the reaction RNA(n) + a ribonucleoside 5'-triphosphate = RNA(n+1) + diphosphate. Its function is as follows. DNA-dependent RNA polymerase catalyzes the transcription of DNA into RNA using the four ribonucleoside triphosphates as substrates. This Methylocella silvestris (strain DSM 15510 / CIP 108128 / LMG 27833 / NCIMB 13906 / BL2) protein is DNA-directed RNA polymerase subunit alpha.